The following is a 309-amino-acid chain: Homoserine O-succinyltransferase (309 aa).

The active-site Acyl-thioester intermediate is the Cys-142. Residues Lys-163 and Ser-192 each coordinate substrate. Residue His-235 is the Proton acceptor of the active site. Glu-237 is an active-site residue. Arg-249 is a substrate binding site.

It belongs to the MetA family. As to quaternary structure, homodimer.

The protein localises to the cytoplasm. It carries out the reaction L-homoserine + succinyl-CoA = O-succinyl-L-homoserine + CoA. Its pathway is amino-acid biosynthesis; L-methionine biosynthesis via de novo pathway; O-succinyl-L-homoserine from L-homoserine: step 1/1. Transfers a succinyl group from succinyl-CoA to L-homoserine, forming succinyl-L-homoserine. The polypeptide is Homoserine O-succinyltransferase (Shigella sonnei (strain Ss046)).